The sequence spans 196 residues: Peptidyl-tRNA hydrolase (196 aa).

Residue Tyr14 coordinates tRNA. Catalysis depends on His19, which acts as the Proton acceptor. TRNA is bound by residues Tyr64, Asn66, and Asn112.

Belongs to the PTH family. As to quaternary structure, monomer.

The protein resides in the cytoplasm. The enzyme catalyses an N-acyl-L-alpha-aminoacyl-tRNA + H2O = an N-acyl-L-amino acid + a tRNA + H(+). In terms of biological role, hydrolyzes ribosome-free peptidyl-tRNAs (with 1 or more amino acids incorporated), which drop off the ribosome during protein synthesis, or as a result of ribosome stalling. Catalyzes the release of premature peptidyl moieties from peptidyl-tRNA molecules trapped in stalled 50S ribosomal subunits, and thus maintains levels of free tRNAs and 50S ribosomes. The protein is Peptidyl-tRNA hydrolase of Methylocella silvestris (strain DSM 15510 / CIP 108128 / LMG 27833 / NCIMB 13906 / BL2).